The chain runs to 253 residues: N-acetylmuramoyl-L-alanine amidase CwlM (253 aa).

In terms of domain architecture, MurNAc-LAA spans 4-172; sequence IFIDPGHGGS…IARGHANGLA (169 aa). Positions 179-253 constitute an SPOR domain; that stretch reads KNAAALYKVQ…AEFDTFIYQE (75 aa). Repeat copies occupy residues 184–219 and 220–253. Positions 184 to 253 are 2 X 35 AA approximate tandem repeats; it reads LYKVQIAAFR…AEFDTFIYQE (70 aa).

It belongs to the N-acetylmuramoyl-L-alanine amidase 3 family.

It is found in the secreted. The enzyme catalyses Hydrolyzes the link between N-acetylmuramoyl residues and L-amino acid residues in certain cell-wall glycopeptides.. Hydrolyzes the cell wall of M.luteus more efficiently than that of B.licheniformis and B.subtilis. The C-terminal region, including the repeats, determines substrate specificity. The protein is N-acetylmuramoyl-L-alanine amidase CwlM (cwlM) of Bacillus licheniformis.